The primary structure comprises 525 residues: Zinc finger C2HC domain-containing protein 1C (525 aa).

Over residues 23–34 the composition is skewed to basic and acidic residues; sequence AHGLHSAKHDPY. Disordered regions lie at residues 23–48, 85–107, and 145–171; these read AHGL…MGHL, CPHS…GKGL, and VHRK…PDSS. Positions 36-48 are enriched in polar residues; it reads QSDSPQRSSMGHL. Residues 90 to 102 show a composition bias toward low complexity; the sequence is GISQQGSGNNAQG. Residues 207–252 are a coiled coil; sequence TQIQRLEAAGESLQKEIRRKEILLREKLKKTEEGLRRIQREKKQAI. Disordered regions lie at residues 292–316, 330–349, and 356–379; these read SRNR…LSDY, NNKI…SQPA, and LQAS…EQEL. Residues 301–312 are compositionally biased toward polar residues; sequence CEQAQENSSPLQ. Residues 359 to 373 are compositionally biased toward low complexity; that stretch reads SSLSGTPGSSGSSSS. 2 consecutive C2HC/C3H-type zinc fingers follow at residues 378 to 407 and 487 to 516; these read ELGK…MQGS and DYVQ…IKNR. Zn(2+)-binding residues include cysteine 382, cysteine 385, histidine 397, cysteine 401, cysteine 491, cysteine 494, histidine 506, and cysteine 510.

The protein belongs to the ZC2HC1 family. Requires Zn(2+) as cofactor.

The sequence is that of Zinc finger C2HC domain-containing protein 1C (Zc2hc1c) from Rattus norvegicus (Rat).